We begin with the raw amino-acid sequence, 1120 residues long: Transcription-repair-coupling factor (1120 aa).

One can recognise a Helicase ATP-binding domain in the interval 591 to 756 (DLTNGMLMDR…LTGLKELSII (166 aa)). 604–611 (GDVGFGKT) serves as a coordination point for ATP. The DEEQ box motif lies at 709–712 (DEEQ). Positions 777-933 (IIRDALLREH…TIASHDADLR (157 aa)) constitute a Helicase C-terminal domain.

The protein in the N-terminal section; belongs to the UvrB family. This sequence in the C-terminal section; belongs to the helicase family. RecG subfamily.

Its subcellular location is the cytoplasm. In terms of biological role, couples transcription and DNA repair by recognizing RNA polymerase (RNAP) stalled at DNA lesions. Mediates ATP-dependent release of RNAP and its truncated transcript from the DNA, and recruitment of nucleotide excision repair machinery to the damaged site. The sequence is that of Transcription-repair-coupling factor from Rickettsia typhi (strain ATCC VR-144 / Wilmington).